The primary structure comprises 427 residues: 3-isopropylmalate dehydratase large subunit (427 aa).

Cysteine 308, cysteine 368, and cysteine 371 together coordinate [4Fe-4S] cluster.

Belongs to the aconitase/IPM isomerase family. LeuC type 2 subfamily. In terms of assembly, heterodimer of LeuC and LeuD. The cofactor is [4Fe-4S] cluster.

The enzyme catalyses (2R,3S)-3-isopropylmalate = (2S)-2-isopropylmalate. Its pathway is amino-acid biosynthesis; L-leucine biosynthesis; L-leucine from 3-methyl-2-oxobutanoate: step 2/4. In terms of biological role, catalyzes the isomerization between 2-isopropylmalate and 3-isopropylmalate, via the formation of 2-isopropylmaleate. In Geobacter sulfurreducens (strain ATCC 51573 / DSM 12127 / PCA), this protein is 3-isopropylmalate dehydratase large subunit.